Consider the following 117-residue polypeptide: MLKEFKEFALKGNVLDLAVAVVMGAAFNKIVTALVSYIIMPLIGLIFGTVDFAESWSFMGIKYGMFVQSIIDFIIIAFALFIFVKIANTLMKKEEEEEIEENTVLLTEIRDLLREKN.

Helical transmembrane passes span Glu7–Phe27, Ile30–Val50, and Gly64–Val84.

It belongs to the MscL family. Homopentamer.

Its subcellular location is the cell membrane. Its function is as follows. Channel that opens in response to stretch forces in the membrane lipid bilayer. May participate in the regulation of osmotic pressure changes within the cell. The sequence is that of Large-conductance mechanosensitive channel from Staphylococcus saprophyticus subsp. saprophyticus (strain ATCC 15305 / DSM 20229 / NCIMB 8711 / NCTC 7292 / S-41).